The following is a 550-amino-acid chain: Arginine--tRNA ligase (550 aa).

Residues Ala130–Gly140 carry the 'HIGH' region motif.

Belongs to the class-I aminoacyl-tRNA synthetase family. Monomer.

It is found in the cytoplasm. The enzyme catalyses tRNA(Arg) + L-arginine + ATP = L-arginyl-tRNA(Arg) + AMP + diphosphate. In Rhodococcus jostii (strain RHA1), this protein is Arginine--tRNA ligase.